The chain runs to 170 residues: Small ribosomal subunit protein mS41 (170 aa).

A mitochondrion-targeting transit peptide spans 1–20; sequence MFRTLLSSTVRSIQLKPVTS.

Belongs to the mitochondrion-specific ribosomal protein mS41 family. As to quaternary structure, component of the mitochondrial small ribosomal subunit (mt-SSU).

It is found in the mitochondrion. In terms of biological role, component of the mitochondrial ribosome (mitoribosome), a dedicated translation machinery responsible for the synthesis of mitochondrial genome-encoded proteins, including at least some of the essential transmembrane subunits of the mitochondrial respiratory chain. The mitoribosomes are attached to the mitochondrial inner membrane and translation products are cotranslationally integrated into the membrane. mS41 is involved in telomere length regulation. The protein is Small ribosomal subunit protein mS41 (FYV4) of Candida albicans (strain SC5314 / ATCC MYA-2876) (Yeast).